Here is a 491-residue protein sequence, read N- to C-terminus: Protein nucleotidyltransferase YdiU (491 aa).

ATP is bound by residues Gly94, Gly96, Arg97, Lys117, Asp129, Gly130, Arg180, and Arg187. Asp256 serves as the catalytic Proton acceptor. Mg(2+) contacts are provided by Asn257 and Asp266. Residue Asp266 participates in ATP binding.

It belongs to the SELO family. Requires Mg(2+) as cofactor. The cofactor is Mn(2+).

It catalyses the reaction L-seryl-[protein] + ATP = 3-O-(5'-adenylyl)-L-seryl-[protein] + diphosphate. It carries out the reaction L-threonyl-[protein] + ATP = 3-O-(5'-adenylyl)-L-threonyl-[protein] + diphosphate. The catalysed reaction is L-tyrosyl-[protein] + ATP = O-(5'-adenylyl)-L-tyrosyl-[protein] + diphosphate. The enzyme catalyses L-histidyl-[protein] + UTP = N(tele)-(5'-uridylyl)-L-histidyl-[protein] + diphosphate. It catalyses the reaction L-seryl-[protein] + UTP = O-(5'-uridylyl)-L-seryl-[protein] + diphosphate. It carries out the reaction L-tyrosyl-[protein] + UTP = O-(5'-uridylyl)-L-tyrosyl-[protein] + diphosphate. In terms of biological role, nucleotidyltransferase involved in the post-translational modification of proteins. It can catalyze the addition of adenosine monophosphate (AMP) or uridine monophosphate (UMP) to a protein, resulting in modifications known as AMPylation and UMPylation. The sequence is that of Protein nucleotidyltransferase YdiU from Clostridium botulinum (strain Alaska E43 / Type E3).